The chain runs to 172 residues: 3-hydroxydecanoyl-[acyl-carrier-protein] dehydratase (172 aa).

Residue histidine 71 is part of the active site.

The protein belongs to the thioester dehydratase family. FabA subfamily. As to quaternary structure, homodimer.

It localises to the cytoplasm. The catalysed reaction is a (3R)-hydroxyacyl-[ACP] = a (2E)-enoyl-[ACP] + H2O. It carries out the reaction (3R)-hydroxydecanoyl-[ACP] = (2E)-decenoyl-[ACP] + H2O. The enzyme catalyses (2E)-decenoyl-[ACP] = (3Z)-decenoyl-[ACP]. It participates in lipid metabolism; fatty acid biosynthesis. Its function is as follows. Necessary for the introduction of cis unsaturation into fatty acids. Catalyzes the dehydration of (3R)-3-hydroxydecanoyl-ACP to E-(2)-decenoyl-ACP and then its isomerization to Z-(3)-decenoyl-ACP. Can catalyze the dehydratase reaction for beta-hydroxyacyl-ACPs with saturated chain lengths up to 16:0, being most active on intermediate chain length. The chain is 3-hydroxydecanoyl-[acyl-carrier-protein] dehydratase from Klebsiella pneumoniae subsp. pneumoniae (strain ATCC 700721 / MGH 78578).